We begin with the raw amino-acid sequence, 124 residues long: uncharacterized protein (124 aa).

This is an uncharacterized protein from Acanthamoeba polyphaga (Amoeba).